Here is a 503-residue protein sequence, read N- to C-terminus: UDP-N-acetylglucosamine--peptide N-acetylglucosaminyltransferase GtfA subunit (503 aa).

Residues 1–78 (MTIYNINLGI…FTDIKIAPTS (78 aa)) form an N-terminus R-fold-1 region. 16 to 19 (GVEY) provides a ligand contact to UDP. Residues 79–195 (VTVDDVLAYF…VYHFKDKIFY (117 aa)) are extended beta-sheet domain. The segment at 196-306 (GKQAFVRAFM…QPKIVTIPVG (111 aa)) is C-terminus R-fold-1. An N-acetyl-D-glucosamine-binding site is contributed by His242. Positions 307–503 (SIDSLTDSSQ…KKTVEEVLHD (197 aa)) are R-fold-2. Arg328 lines the UDP pocket. Glu332 is an N-acetyl-D-glucosamine binding site. Residues Lys333, Gly358, and 384–385 (HA) contribute to the UDP site. 404–407 (EGFG) is a binding site for N-acetyl-D-glucosamine. 408-412 (LTLME) serves as a coordination point for UDP.

The protein belongs to the glycosyltransferase group 1 family. Glycosyltransferase 4 subfamily. In terms of assembly, monomer. Interacts with stabilizing protein GtfB, probably as a heterotetramer with 2 subunits each of GtfA and GtfB, part of the accessory SecA2/SecY2 protein translocation apparatus.

The protein resides in the cytoplasm. The protein localises to the cell membrane. It carries out the reaction L-seryl-[protein] + UDP-N-acetyl-alpha-D-glucosamine = 3-O-[N-acetyl-alpha-D-glucosaminyl]-L-seryl-[protein] + UDP + H(+). It functions in the pathway protein modification; protein glycosylation. Its function is as follows. Required for the polymorphic O-glycosylation of serine-rich repeat protein PsrP. Catalyzes the first step in glycosylation by transferring N-acetylglucosamine from UDP-GlcNAc to serine residues in PsrP. Part of the accessory SecA2/SecY2 system specifically required to export serine-rich repeat cell wall proteins encoded upstream in the same operon. The GtfA-GtfB complex adds GlcNAc from UDP-GlcNAc to PsrP (experimentally characterized with truncated PsrP-SSR1 constructs); this subunit alone has weak N-acetylglucosaminyl transferase activity that is 10-fold stimulated by GtfB. The complex requires at least a 25 residue-long peptide for activity; the in vitro assay has only been seen to glycosylate Ser residues. The alpha linkage was shown in L.reuteri. This chain is UDP-N-acetylglucosamine--peptide N-acetylglucosaminyltransferase GtfA subunit, found in Streptococcus pneumoniae serotype 4 (strain ATCC BAA-334 / TIGR4).